The sequence spans 105 residues: Large ribosomal subunit protein uL24 (105 aa).

The protein belongs to the universal ribosomal protein uL24 family. Part of the 50S ribosomal subunit.

Its function is as follows. One of two assembly initiator proteins, it binds directly to the 5'-end of the 23S rRNA, where it nucleates assembly of the 50S subunit. One of the proteins that surrounds the polypeptide exit tunnel on the outside of the subunit. The polypeptide is Large ribosomal subunit protein uL24 (Staphylococcus aureus (strain Mu3 / ATCC 700698)).